We begin with the raw amino-acid sequence, 428 residues long: Serine--tRNA ligase (428 aa).

231–233 (TAE) contributes to the L-serine binding site. 262–264 (RSE) lines the ATP pocket. E285 serves as a coordination point for L-serine. 349–352 (EISS) provides a ligand contact to ATP. L-serine is bound at residue S385.

This sequence belongs to the class-II aminoacyl-tRNA synthetase family. Type-1 seryl-tRNA synthetase subfamily. In terms of assembly, homodimer. The tRNA molecule binds across the dimer.

It is found in the cytoplasm. It catalyses the reaction tRNA(Ser) + L-serine + ATP = L-seryl-tRNA(Ser) + AMP + diphosphate + H(+). It carries out the reaction tRNA(Sec) + L-serine + ATP = L-seryl-tRNA(Sec) + AMP + diphosphate + H(+). It participates in aminoacyl-tRNA biosynthesis; selenocysteinyl-tRNA(Sec) biosynthesis; L-seryl-tRNA(Sec) from L-serine and tRNA(Sec): step 1/1. Its function is as follows. Catalyzes the attachment of serine to tRNA(Ser). Is also able to aminoacylate tRNA(Sec) with serine, to form the misacylated tRNA L-seryl-tRNA(Sec), which will be further converted into selenocysteinyl-tRNA(Sec). This Staphylococcus aureus (strain MRSA252) protein is Serine--tRNA ligase.